The sequence spans 555 residues: DNA repair and recombination protein rhm52 (555 aa).

A DNA-binding region spans residues 148–152; that stretch reads KRALR. 2 disordered regions span residues 197–232 and 251–555; these read VVAEPRLPPVKPEPSNTASAAPHPPLPPLPEADSFD and HPDE…MKLN. Residues 260-276 show a composition bias toward low complexity; it reads NSHASGSSGNTGASTTN. Composition is skewed to polar residues over residues 283–300 and 312–334; these read SGNQSNQQRPMQPSSRMN and TPNHQINRSGPQNGSINNQQNNH. Composition is skewed to low complexity over residues 354-375 and 382-404; these read NNNNTSNGTGPHQRPLGNGPQQ and NGAATAPSGAEPVAFFSARAVAR. Positions 468–478 are enriched in polar residues; the sequence is DNPSNNAGNGV. The segment covering 479 to 490 has biased composition (low complexity); that stretch reads QNQPQKPQPSQQ. Polar residues predominate over residues 491 to 500; the sequence is RGSILNPQFD. The span at 536 to 547 shows a compositional bias: low complexity; that stretch reads PNGTSNGNGTPG.

This sequence belongs to the RAD52 family. Part of a complex that includes RAD51, RAD52 and RAD59.

The protein resides in the nucleus. Involved in DNA double-strand break (DSB) repair and recombination. Promotes the annealing of complementary single-stranded DNA and by stimulation of the RAD51 recombinase. This chain is DNA repair and recombination protein rhm52 (RHM52), found in Pyricularia oryzae (strain 70-15 / ATCC MYA-4617 / FGSC 8958) (Rice blast fungus).